A 778-amino-acid polypeptide reads, in one-letter code: Degenerin deg-1 (778 aa).

Topologically, residues 1–82 (MSNHHSKTKK…IARNSFSKLM (82 aa)) are cytoplasmic. Residues 83–103 (WGLIIFSFLLMFAYQASKLIF) traverse the membrane as a helical segment. Over 104–711 (KFSAHEKITD…LVNLIADFGG (608 aa)) the chain is Extracellular. Over residues 154–165 (NAKTHSKSEGEK) the composition is skewed to basic and acidic residues. Disordered stretches follow at residues 154–180 (NAKT…DASQ) and 201–220 (SNKT…QRSI). N-linked (GlcNAc...) asparagine glycans are attached at residues Asn-202, Asn-209, Asn-272, and Asn-342. The segment covering 346 to 369 (TSTTTTTTTTPPPTTTSTTTTTTT) has biased composition (low complexity). The segment at 346–380 (TSTTTTTTTTPPPTTTSTTTTTTTTPPPTTTARPN) is disordered. N-linked (GlcNAc...) asparagine glycosylation is found at Asn-473, Asn-492, and Asn-606. The chain crosses the membrane as a helical span at residues 712–732 (HLGLWLGFSVITVMEVCVLLV). At 733–778 (DMISLFFKSRHEEKLLRQSTKRKDVPEDKRQITVGSGRKSDAFVSI) the chain is on the cytoplasmic side.

It belongs to the amiloride-sensitive sodium channel (TC 1.A.6) family.

It localises to the membrane. Its function is as follows. Probable sodium channel subunit. Required by a subset of neurons. In Caenorhabditis elegans, this protein is Degenerin deg-1.